The chain runs to 468 residues: Peroxisome proliferator-activated receptor alpha (468 aa).

A DNA-binding region (nuclear receptor) is located at residues 99–173 (NIECRICGDK…VGMSHNAIRF (75 aa)). NR C4-type zinc fingers lie at residues 102 to 122 (CRIC…CEGC) and 139 to 161 (CDRS…FHKC). The region spanning 239 to 466 (FVIHDMETLC…HPLLQEIYRD (228 aa)) is the NR LBD domain. Positions 280, 314, and 464 each coordinate indeglitazar. Residues 304–433 (DQVTLLKYGV…PKLLQKMADL (130 aa)) are required for heterodimerization with RXRA.

Belongs to the nuclear hormone receptor family. NR1 subfamily. Heterodimer; with RXRA. This heterodimerization is required for DNA binding and transactivation activity. Interacts with NCOA3 coactivator. Interacts with CITED2; the interaction stimulates its transcriptional activity. Also interacts with PPARBP in vitro. Interacts with AKAP13, LPIN1, PRDM16 and coactivator NCOA6. Interacts with ASXL1 and ASXL2. Interacts with PER2. Interacts with SIRT1; the interaction seems to be modulated by NAD(+) levels. Interacts with CRY1 and CRY2. In hepatocytes, interacts with PAQR3 and HUWE1; the interactions promote PPARA poylubiquitination and HUWE1-mediated degradation. Post-translationally, ubiquitinated by E3 ubiquitin-protein ligase HUWE1; leading to proteasomal degradation. In terms of processing, phosphorylated. As to expression, skeletal muscle, liver, heart and kidney. Expressed in monocytes.

The protein localises to the nucleus. Its function is as follows. Ligand-activated transcription factor. Key regulator of lipid metabolism. Activated by the endogenous ligand 1-palmitoyl-2-oleoyl-sn-glycerol-3-phosphocholine (16:0/18:1-GPC). Activated by oleylethanolamide, a naturally occurring lipid that regulates satiety. Receptor for peroxisome proliferators such as hypolipidemic drugs and fatty acids. Regulates the peroxisomal beta-oxidation pathway of fatty acids. Functions as a transcription activator for the ACOX1 and P450 genes. Transactivation activity requires heterodimerization with RXRA and is antagonized by NR2C2. May be required for the propagation of clock information to metabolic pathways regulated by PER2. The sequence is that of Peroxisome proliferator-activated receptor alpha (PPARA) from Homo sapiens (Human).